We begin with the raw amino-acid sequence, 176 residues long: Small ribosomal subunit protein uS5 (176 aa).

The S5 DRBM domain occupies 11–74 (LSEVLVDVNR…QAAKKRMMKV (64 aa)).

It belongs to the universal ribosomal protein uS5 family. In terms of assembly, part of the 30S ribosomal subunit. Contacts proteins S4 and S8.

Its function is as follows. With S4 and S12 plays an important role in translational accuracy. In terms of biological role, located at the back of the 30S subunit body where it stabilizes the conformation of the head with respect to the body. The sequence is that of Small ribosomal subunit protein uS5 from Rickettsia akari (strain Hartford).